Here is a 291-residue protein sequence, read N- to C-terminus: Tryptophan synthase alpha chain (291 aa).

Catalysis depends on proton acceptor residues glutamate 69 and aspartate 80.

Belongs to the TrpA family. Tetramer of two alpha and two beta chains.

It carries out the reaction (1S,2R)-1-C-(indol-3-yl)glycerol 3-phosphate + L-serine = D-glyceraldehyde 3-phosphate + L-tryptophan + H2O. Its pathway is amino-acid biosynthesis; L-tryptophan biosynthesis; L-tryptophan from chorismate: step 5/5. Its function is as follows. The alpha subunit is responsible for the aldol cleavage of indoleglycerol phosphate to indole and glyceraldehyde 3-phosphate. In Bifidobacterium longum (strain NCC 2705), this protein is Tryptophan synthase alpha chain.